A 346-amino-acid chain; its full sequence is Tetraacyldisaccharide 4'-kinase (346 aa).

54-61 is a binding site for ATP; it reads TVGGAGKT.

It belongs to the LpxK family.

The catalysed reaction is a lipid A disaccharide + ATP = a lipid IVA + ADP + H(+). The protein operates within glycolipid biosynthesis; lipid IV(A) biosynthesis; lipid IV(A) from (3R)-3-hydroxytetradecanoyl-[acyl-carrier-protein] and UDP-N-acetyl-alpha-D-glucosamine: step 6/6. Functionally, transfers the gamma-phosphate of ATP to the 4'-position of a tetraacyldisaccharide 1-phosphate intermediate (termed DS-1-P) to form tetraacyldisaccharide 1,4'-bis-phosphate (lipid IVA). This chain is Tetraacyldisaccharide 4'-kinase, found in Rhizobium etli (strain ATCC 51251 / DSM 11541 / JCM 21823 / NBRC 15573 / CFN 42).